A 589-amino-acid chain; its full sequence is DNA ligase (589 aa).

Residue Glu250 coordinates ATP. The N6-AMP-lysine intermediate role is filled by Lys252. ATP contacts are provided by Arg257, Arg272, Glu302, Phe342, Arg417, and Lys423.

This sequence belongs to the ATP-dependent DNA ligase family. Mg(2+) serves as cofactor.

The catalysed reaction is ATP + (deoxyribonucleotide)n-3'-hydroxyl + 5'-phospho-(deoxyribonucleotide)m = (deoxyribonucleotide)n+m + AMP + diphosphate.. DNA ligase that seals nicks in double-stranded DNA during DNA replication, DNA recombination and DNA repair. This Cenarchaeum symbiosum (strain A) protein is DNA ligase.